The chain runs to 74 residues: MFTMKKSLLLIFFLGTISLSLCQEERNADDDDGEMTEEEKRGIMDTLKNLAKTAGKGALQSLVKMASCKLSGQC.

The N-terminal stretch at 1-22 (MFTMKKSLLLIFFLGTISLSLC) is a signal peptide. A propeptide spanning residues 23–41 (QEERNADDDDGEMTEEEKR) is cleaved from the precursor. Cys68 and Cys74 are oxidised to a cystine.

It belongs to the frog skin active peptide (FSAP) family. Brevinin subfamily. As to expression, expressed by the skin glands.

The protein localises to the secreted. Functionally, shows antibacterial activity against representative Gram-negative and Gram-positive bacterial species, and hemolytic activity. The protein is Brevinin-2Ef of Pelophylax lessonae (Pool frog).